The following is a 419-amino-acid chain: eIF5-mimic protein 1 (419 aa).

Residues 1–22 (MNKHQKPVLTGQRFKTRKRDEK) are disordered. Residue lysine 117 is modified to N6-acetyllysine. The W2 domain occupies 248–415 (VQQSLGTRKE…QNAEEESESE (168 aa)). Serine 412, serine 414, and serine 419 each carry phosphoserine.

This sequence belongs to the BZW family. Interacts with EIF3E, EIF2S2 and EIF3C.

The protein resides in the cytoplasm. Its function is as follows. Translation initiation regulator which represses non-AUG initiated translation and repeat-associated non-AUG (RAN) initiated translation by acting as a competitive inhibitor of eukaryotic translation initiation factor 5 (EIF5) function. Increases the accuracy of translation initiation by impeding EIF5-dependent translation from non-AUG codons by competing with it for interaction with EIF2S2 within the 43S pre-initiation complex (PIC) in an EIF3C-binding dependent manner. This is eIF5-mimic protein 1 (Bzw2) from Mus musculus (Mouse).